Here is a 358-residue protein sequence, read N- to C-terminus: MFMHLEVYYYAFILMAHMKTCCGWSVNNFLMTGPKAYLIYSSSVAAGAQSGIEECKYQFAWDRWKCPERALQLSTHSGLRSANRETAFFHAISSAGVMYTLTRNCSLGDFDNCGCDDTRNGQRGGQGWLWGGCSDNVGFGEVISKQFVDALETGQDARAAMNLHNNEVGRKAVKGTMQRTCKCHGVSGSCTTQTCWLQLPEFREVGNYLKEKYHRAVKVDLLRGAGNSAASRGAIAETFNSISRKELVHLEDSPDYCLENRTLGLPGTEGRECLRKGKNLSKWEKRTCKRLCGDCGLAVEERRAETVSSCNCKFHWCCAVKCEQCRKTVTKYYCVKRSKRVKNDNASRRKSYRLKKKH.

An N-terminal signal peptide occupies residues 1 to 23; it reads MFMHLEVYYYAFILMAHMKTCCG. C55 and C66 are disulfide-bonded. The N-linked (GlcNAc...) asparagine glycan is linked to N104. Intrachain disulfides connect C105–C113, C115–C133, C181–C195, C183–C190, C257–C295, C273–C288, C292–C334, C310–C325, C312–C322, and C317–C318. Residue S187 is the site of O-palmitoleoyl serine attachment. Residues N260 and N279 are each glycosylated (N-linked (GlcNAc...) asparagine). Residue N345 is glycosylated (N-linked (GlcNAc...) asparagine).

The protein belongs to the Wnt family. In terms of processing, palmitoleoylation is required for efficient binding to frizzled receptors. Depalmitoleoylation leads to Wnt signaling pathway inhibition. Post-translationally, proteolytic processing by tiki1 and tiki2 promotes oxidation and formation of large disulfide-bond oligomers, leading to inactivation of wnt8b. Hindbrain r1, 2 and 5.

The protein localises to the secreted. Its subcellular location is the extracellular space. It localises to the extracellular matrix. Functionally, ligand for fzd8a, a member of the G-protein coupled frizzled receptor family. May play a role in the establishment of polarity in the nervous system. Involved in canonical Wnt signaling pathway. During embryonic development, required for the acquisition of caudal diencephalic fate. Antagonizes eye specification. The chain is Protein Wnt-8b (wnt8b) from Danio rerio (Zebrafish).